A 238-amino-acid polypeptide reads, in one-letter code: 1-(5-phosphoribosyl)-5-[(5-phosphoribosylamino)methylideneamino] imidazole-4-carboxamide isomerase (238 aa).

Aspartate 8 (proton acceptor) is an active-site residue. Aspartate 130 acts as the Proton donor in catalysis.

The protein belongs to the HisA/HisF family.

It localises to the cytoplasm. The catalysed reaction is 1-(5-phospho-beta-D-ribosyl)-5-[(5-phospho-beta-D-ribosylamino)methylideneamino]imidazole-4-carboxamide = 5-[(5-phospho-1-deoxy-D-ribulos-1-ylimino)methylamino]-1-(5-phospho-beta-D-ribosyl)imidazole-4-carboxamide. It functions in the pathway amino-acid biosynthesis; L-histidine biosynthesis; L-histidine from 5-phospho-alpha-D-ribose 1-diphosphate: step 4/9. This chain is 1-(5-phosphoribosyl)-5-[(5-phosphoribosylamino)methylideneamino] imidazole-4-carboxamide isomerase, found in Methanococcus maripaludis (strain C7 / ATCC BAA-1331).